Reading from the N-terminus, the 218-residue chain is uncharacterized protein (218 aa).

The tract at residues 1–24 (MAAQPQAPSAGGRPRAGKAVKSVA) is disordered. In terms of domain architecture, HTH tetR-type spans 28 to 88 (KLSRESIVEG…AVRIRVIDDI (61 aa)). Positions 51-70 (TINALATQLGTKGPSLYNHV) form a DNA-binding region, H-T-H motif. Phosphothreonine; by PknH is present on Thr57.

In terms of processing, phosphorylated on Thr-57 by PknH.

This is an uncharacterized protein from Mycobacterium tuberculosis (strain ATCC 25618 / H37Rv).